Here is a 398-residue protein sequence, read N- to C-terminus: Succinate--CoA ligase [ADP-forming] subunit beta (398 aa).

The ATP-grasp domain maps to 9–254; it reads KALLGEFGVP…ETEEDAKEIE (246 aa). ATP is bound by residues K46, 53–55, E109, S112, and E117; that span reads GRG. Positions 209 and 223 each coordinate Mg(2+). Residues N274 and 331-333 contribute to the substrate site; that span reads GIM.

The protein belongs to the succinate/malate CoA ligase beta subunit family. Heterotetramer of two alpha and two beta subunits. Requires Mg(2+) as cofactor.

The catalysed reaction is succinate + ATP + CoA = succinyl-CoA + ADP + phosphate. It carries out the reaction GTP + succinate + CoA = succinyl-CoA + GDP + phosphate. The protein operates within carbohydrate metabolism; tricarboxylic acid cycle; succinate from succinyl-CoA (ligase route): step 1/1. Functionally, succinyl-CoA synthetase functions in the citric acid cycle (TCA), coupling the hydrolysis of succinyl-CoA to the synthesis of either ATP or GTP and thus represents the only step of substrate-level phosphorylation in the TCA. The beta subunit provides nucleotide specificity of the enzyme and binds the substrate succinate, while the binding sites for coenzyme A and phosphate are found in the alpha subunit. The chain is Succinate--CoA ligase [ADP-forming] subunit beta from Bradyrhizobium diazoefficiens (strain JCM 10833 / BCRC 13528 / IAM 13628 / NBRC 14792 / USDA 110).